The primary structure comprises 150 residues: D-aminoacyl-tRNA deacylase (150 aa).

The short motif at 138-139 is the Gly-cisPro motif, important for rejection of L-amino acids element; the sequence is GP.

This sequence belongs to the DTD family. Homodimer.

The protein resides in the cytoplasm. The enzyme catalyses glycyl-tRNA(Ala) + H2O = tRNA(Ala) + glycine + H(+). It catalyses the reaction a D-aminoacyl-tRNA + H2O = a tRNA + a D-alpha-amino acid + H(+). An aminoacyl-tRNA editing enzyme that deacylates mischarged D-aminoacyl-tRNAs. Also deacylates mischarged glycyl-tRNA(Ala), protecting cells against glycine mischarging by AlaRS. Acts via tRNA-based rather than protein-based catalysis; rejects L-amino acids rather than detecting D-amino acids in the active site. By recycling D-aminoacyl-tRNA to D-amino acids and free tRNA molecules, this enzyme counteracts the toxicity associated with the formation of D-aminoacyl-tRNA entities in vivo and helps enforce protein L-homochirality. In Bacteroides thetaiotaomicron (strain ATCC 29148 / DSM 2079 / JCM 5827 / CCUG 10774 / NCTC 10582 / VPI-5482 / E50), this protein is D-aminoacyl-tRNA deacylase.